Consider the following 154-residue polypeptide: Ribonuclease H (154 aa).

Residues 1–142 (MRKQIEIFTD…CDELAKQGAE (142 aa)) form the RNase H type-1 domain. Mg(2+)-binding residues include D10, E48, D70, and D134.

This sequence belongs to the RNase H family. As to quaternary structure, monomer. The cofactor is Mg(2+).

It is found in the cytoplasm. It catalyses the reaction Endonucleolytic cleavage to 5'-phosphomonoester.. Its function is as follows. Endonuclease that specifically degrades the RNA of RNA-DNA hybrids. The polypeptide is Ribonuclease H (Actinobacillus succinogenes (strain ATCC 55618 / DSM 22257 / CCUG 43843 / 130Z)).